We begin with the raw amino-acid sequence, 72 residues long: Translation initiation factor IF-1 (72 aa).

Residues 1-72 (MSKEEAIEVE…SRGRITYRAK (72 aa)) enclose the S1-like domain.

This sequence belongs to the IF-1 family. In terms of assembly, component of the 30S ribosomal translation pre-initiation complex which assembles on the 30S ribosome in the order IF-2 and IF-3, IF-1 and N-formylmethionyl-tRNA(fMet); mRNA recruitment can occur at any time during PIC assembly.

It localises to the cytoplasm. Its function is as follows. One of the essential components for the initiation of protein synthesis. Stabilizes the binding of IF-2 and IF-3 on the 30S subunit to which N-formylmethionyl-tRNA(fMet) subsequently binds. Helps modulate mRNA selection, yielding the 30S pre-initiation complex (PIC). Upon addition of the 50S ribosomal subunit IF-1, IF-2 and IF-3 are released leaving the mature 70S translation initiation complex. The polypeptide is Translation initiation factor IF-1 (Geobacter metallireducens (strain ATCC 53774 / DSM 7210 / GS-15)).